Consider the following 124-residue polypeptide: UPF0102 protein PP_1324 (124 aa).

Belongs to the UPF0102 family.

This chain is UPF0102 protein PP_1324, found in Pseudomonas putida (strain ATCC 47054 / DSM 6125 / CFBP 8728 / NCIMB 11950 / KT2440).